A 292-amino-acid polypeptide reads, in one-letter code: Acetylglutamate kinase (292 aa).

Substrate-binding positions include 64 to 65 (GG), R86, and N190.

This sequence belongs to the acetylglutamate kinase family. ArgB subfamily.

It localises to the cytoplasm. It catalyses the reaction N-acetyl-L-glutamate + ATP = N-acetyl-L-glutamyl 5-phosphate + ADP. The protein operates within amino-acid biosynthesis; L-arginine biosynthesis; N(2)-acetyl-L-ornithine from L-glutamate: step 2/4. Catalyzes the ATP-dependent phosphorylation of N-acetyl-L-glutamate. This chain is Acetylglutamate kinase, found in Geobacter metallireducens (strain ATCC 53774 / DSM 7210 / GS-15).